The chain runs to 417 residues: mRNA cap guanine-N(7) methyltransferase (417 aa).

The 284-residue stretch at Ser-129–Val-412 folds into the mRNA cap 0 methyltransferase domain. Position 138–139 (Asn-138–Asn-139) interacts with mRNA. Residues Lys-142, Gly-160, Asp-182, Asp-211, Gln-237, and Tyr-242 each contribute to the S-adenosyl-L-methionine site.

It belongs to the class I-like SAM-binding methyltransferase superfamily. mRNA cap 0 methyltransferase family.

The protein resides in the nucleus. The catalysed reaction is a 5'-end (5'-triphosphoguanosine)-ribonucleoside in mRNA + S-adenosyl-L-methionine = a 5'-end (N(7)-methyl 5'-triphosphoguanosine)-ribonucleoside in mRNA + S-adenosyl-L-homocysteine. Functionally, responsible for methylating the 5'-cap structure of mRNAs. This Candida glabrata (strain ATCC 2001 / BCRC 20586 / JCM 3761 / NBRC 0622 / NRRL Y-65 / CBS 138) (Yeast) protein is mRNA cap guanine-N(7) methyltransferase (ABD1).